The following is a 72-amino-acid chain: Small proline-rich protein 2B (72 aa).

The segment covering 1–11 (MSYQQQQCKQP) has biased composition (low complexity). The interval 1 to 20 (MSYQQQQCKQPCQPPPVCPT) is disordered. A run of 3 repeats spans residues 21 to 29 (PKCPEPCPP), 30 to 38 (PKCPEPCPP), and 39 to 47 (PKCPQPCPP). A 3 X 9 AA tandem repeats of P-K-C-P-[EQ]-P-C-P-P region spans residues 21-47 (PKCPEPCPPPKCPEPCPPPKCPQPCPP). A disordered region spans residues 42–72 (PQPCPPQQCQQKYPPVTPSPPCQPKYPPKSK). Residues 56–72 (PVTPSPPCQPKYPPKSK) are compositionally biased toward pro residues.

It belongs to the cornifin (SPRR) family. Suprabasal layers of squamous-differentiated tissues such as epidermis, esophagus, tongue and trachea.

Its subcellular location is the cytoplasm. Its function is as follows. Cross-linked envelope protein of keratinocytes. It is a keratinocyte protein that first appears in the cell cytosol, but ultimately becomes cross-linked to membrane proteins by transglutaminase. All that results in the formation of an insoluble envelope beneath the plasma membrane. The sequence is that of Small proline-rich protein 2B (SPRR2B) from Homo sapiens (Human).